The sequence spans 209 residues: Uracil phosphoribosyltransferase (209 aa).

5-phospho-alpha-D-ribose 1-diphosphate is bound by residues arginine 79, arginine 104, and aspartate 131–serine 139. Residues valine 194 and glycine 199–alanine 201 each bind uracil. A 5-phospho-alpha-D-ribose 1-diphosphate-binding site is contributed by aspartate 200.

Belongs to the UPRTase family. Mg(2+) is required as a cofactor.

It carries out the reaction UMP + diphosphate = 5-phospho-alpha-D-ribose 1-diphosphate + uracil. It participates in pyrimidine metabolism; UMP biosynthesis via salvage pathway; UMP from uracil: step 1/1. With respect to regulation, allosterically activated by GTP. Functionally, catalyzes the conversion of uracil and 5-phospho-alpha-D-ribose 1-diphosphate (PRPP) to UMP and diphosphate. The protein is Uracil phosphoribosyltransferase of Bacillus cereus (strain Q1).